Consider the following 291-residue polypeptide: Protease HtpX (291 aa).

The next 2 helical transmembrane spans lie at 4–24 (IALF…VLNI) and 36–56 (LSGL…ISLM). Residue His-143 coordinates Zn(2+). Glu-144 is an active-site residue. His-147 contributes to the Zn(2+) binding site. A run of 2 helical transmembrane segments spans residues 151–171 (GDMI…IFLS) and 199–219 (FIVS…LTMW). Residue Glu-225 coordinates Zn(2+).

This sequence belongs to the peptidase M48B family. Zn(2+) serves as cofactor.

Its subcellular location is the cell inner membrane. This chain is Protease HtpX, found in Aliivibrio fischeri (strain MJ11) (Vibrio fischeri).